A 105-amino-acid polypeptide reads, in one-letter code: Pyrimidine/purine nucleoside phosphorylase (105 aa).

It belongs to the nucleoside phosphorylase PpnP family.

It carries out the reaction a purine D-ribonucleoside + phosphate = a purine nucleobase + alpha-D-ribose 1-phosphate. The catalysed reaction is adenosine + phosphate = alpha-D-ribose 1-phosphate + adenine. It catalyses the reaction cytidine + phosphate = cytosine + alpha-D-ribose 1-phosphate. The enzyme catalyses guanosine + phosphate = alpha-D-ribose 1-phosphate + guanine. It carries out the reaction inosine + phosphate = alpha-D-ribose 1-phosphate + hypoxanthine. The catalysed reaction is thymidine + phosphate = 2-deoxy-alpha-D-ribose 1-phosphate + thymine. It catalyses the reaction uridine + phosphate = alpha-D-ribose 1-phosphate + uracil. The enzyme catalyses xanthosine + phosphate = alpha-D-ribose 1-phosphate + xanthine. Its function is as follows. Catalyzes the phosphorolysis of diverse nucleosides, yielding D-ribose 1-phosphate and the respective free bases. Can use uridine, adenosine, guanosine, cytidine, thymidine, inosine and xanthosine as substrates. Also catalyzes the reverse reactions. This chain is Pyrimidine/purine nucleoside phosphorylase, found in Cupriavidus pinatubonensis (strain JMP 134 / LMG 1197) (Cupriavidus necator (strain JMP 134)).